The chain runs to 331 residues: Phenylalanine--tRNA ligase alpha subunit (331 aa).

E252 is a Mg(2+) binding site.

It belongs to the class-II aminoacyl-tRNA synthetase family. Phe-tRNA synthetase alpha subunit type 1 subfamily. In terms of assembly, tetramer of two alpha and two beta subunits. It depends on Mg(2+) as a cofactor.

Its subcellular location is the cytoplasm. It carries out the reaction tRNA(Phe) + L-phenylalanine + ATP = L-phenylalanyl-tRNA(Phe) + AMP + diphosphate + H(+). The polypeptide is Phenylalanine--tRNA ligase alpha subunit (Xanthomonas euvesicatoria pv. vesicatoria (strain 85-10) (Xanthomonas campestris pv. vesicatoria)).